Consider the following 180-residue polypeptide: NAD(P)H-quinone oxidoreductase subunit I, chloroplastic (180 aa).

2 consecutive 4Fe-4S ferredoxin-type domains span residues 55 to 84 (GRIH…VHWR) and 95 to 124 (LNYS…MTEE). Cys-64, Cys-67, Cys-70, Cys-74, Cys-104, Cys-107, Cys-110, and Cys-114 together coordinate [4Fe-4S] cluster.

This sequence belongs to the complex I 23 kDa subunit family. NDH is composed of at least 16 different subunits, 5 of which are encoded in the nucleus. The cofactor is [4Fe-4S] cluster.

The protein localises to the plastid. Its subcellular location is the chloroplast thylakoid membrane. It carries out the reaction a plastoquinone + NADH + (n+1) H(+)(in) = a plastoquinol + NAD(+) + n H(+)(out). The enzyme catalyses a plastoquinone + NADPH + (n+1) H(+)(in) = a plastoquinol + NADP(+) + n H(+)(out). Functionally, NDH shuttles electrons from NAD(P)H:plastoquinone, via FMN and iron-sulfur (Fe-S) centers, to quinones in the photosynthetic chain and possibly in a chloroplast respiratory chain. The immediate electron acceptor for the enzyme in this species is believed to be plastoquinone. Couples the redox reaction to proton translocation, and thus conserves the redox energy in a proton gradient. The chain is NAD(P)H-quinone oxidoreductase subunit I, chloroplastic from Calycanthus floridus var. glaucus (Eastern sweetshrub).